The chain runs to 393 residues: Protein TsgA (393 aa).

Transmembrane regions (helical) follow at residues 11–31 (WISFLSYALTGALVIVTGMVM), 51–71 (FLNAGILISIFLNAWLMEIVP), 78–98 (FGFLLMVLAVAGLMFSHSLAL), 101–121 (AAMFILGVVSGITMSIGTFLV), 134–154 (LLFTDSFFSMAGMIFPMIAAF), 162–182 (WYWVYACIGLVYVAIFILTFG), 206–226 (IGVLFLSVAALCYILGQLGFI), 245–265 (TLVSNFWMSYMVGMWAFSFIL), 273–293 (ILTVLAGLAAILMYVFNTGTP), 297–317 (AWSILALGFFSSAIYTTIITL), 332–352 (FVLTCGTIGTMLTFVVTGPIV), and 361–381 (LLTANGLYAVVFVMCFLLGFV).

This sequence belongs to the major facilitator superfamily. TsgA family.

The protein localises to the cell inner membrane. This chain is Protein TsgA, found in Escherichia coli O6:K15:H31 (strain 536 / UPEC).